Here is a 400-residue protein sequence, read N- to C-terminus: Nicotinate phosphoribosyltransferase (400 aa).

His-220 is subject to Phosphohistidine; by autocatalysis.

Belongs to the NAPRTase family. Transiently phosphorylated on a His residue during the reaction cycle. Phosphorylation strongly increases the affinity for substrates and increases the rate of nicotinate D-ribonucleotide production. Dephosphorylation regenerates the low-affinity form of the enzyme, leading to product release.

It catalyses the reaction nicotinate + 5-phospho-alpha-D-ribose 1-diphosphate + ATP + H2O = nicotinate beta-D-ribonucleotide + ADP + phosphate + diphosphate. Its pathway is cofactor biosynthesis; NAD(+) biosynthesis; nicotinate D-ribonucleotide from nicotinate: step 1/1. Its function is as follows. Catalyzes the synthesis of beta-nicotinate D-ribonucleotide from nicotinate and 5-phospho-D-ribose 1-phosphate at the expense of ATP. The chain is Nicotinate phosphoribosyltransferase from Escherichia coli O127:H6 (strain E2348/69 / EPEC).